The primary structure comprises 164 residues: ATP synthase subunit b (164 aa).

A helical membrane pass occupies residues 8-28; it reads FGIIFWQTITLLFVLFILGKF.

The protein belongs to the ATPase B chain family. In terms of assembly, F-type ATPases have 2 components, F(1) - the catalytic core - and F(0) - the membrane proton channel. F(1) has five subunits: alpha(3), beta(3), gamma(1), delta(1), epsilon(1). F(0) has three main subunits: a(1), b(2) and c(10-14). The alpha and beta chains form an alternating ring which encloses part of the gamma chain. F(1) is attached to F(0) by a central stalk formed by the gamma and epsilon chains, while a peripheral stalk is formed by the delta and b chains.

The protein resides in the cell membrane. F(1)F(0) ATP synthase produces ATP from ADP in the presence of a proton or sodium gradient. F-type ATPases consist of two structural domains, F(1) containing the extramembraneous catalytic core and F(0) containing the membrane proton channel, linked together by a central stalk and a peripheral stalk. During catalysis, ATP synthesis in the catalytic domain of F(1) is coupled via a rotary mechanism of the central stalk subunits to proton translocation. Its function is as follows. Component of the F(0) channel, it forms part of the peripheral stalk, linking F(1) to F(0). This Amoebophilus asiaticus (strain 5a2) protein is ATP synthase subunit b.